The chain runs to 382 residues: S-adenosylmethionine synthase (382 aa).

His-15 is a binding site for ATP. Mg(2+) is bound at residue Asp-17. Glu-43 is a binding site for K(+). L-methionine contacts are provided by Glu-56 and Gln-99. Positions 99–109 (QSPDINQGVDR) are flexible loop. ATP-binding positions include 164–166 (DAK), 230–231 (RF), Asp-239, 245–246 (RK), Ala-262, and Lys-266. Asp-239 contributes to the L-methionine binding site. Lys-270 is a binding site for L-methionine.

The protein belongs to the AdoMet synthase family. Homotetramer; dimer of dimers. The cofactor is Mg(2+). Requires K(+) as cofactor.

It localises to the cytoplasm. The enzyme catalyses L-methionine + ATP + H2O = S-adenosyl-L-methionine + phosphate + diphosphate. It functions in the pathway amino-acid biosynthesis; S-adenosyl-L-methionine biosynthesis; S-adenosyl-L-methionine from L-methionine: step 1/1. In terms of biological role, catalyzes the formation of S-adenosylmethionine (AdoMet) from methionine and ATP. The overall synthetic reaction is composed of two sequential steps, AdoMet formation and the subsequent tripolyphosphate hydrolysis which occurs prior to release of AdoMet from the enzyme. The polypeptide is S-adenosylmethionine synthase (Glaesserella parasuis serovar 5 (strain SH0165) (Haemophilus parasuis)).